The chain runs to 152 residues: Ubiquitin-conjugating enzyme E2 W (152 aa).

Met-1 participates in a covalent cross-link: Peptide (Met-Gly) (interchain with G-Cter in ubiquitin). The UBC core domain occupies 4-152 (AATRRLMKEL…TRWWFHDDSV (149 aa)). The Glycyl thioester intermediate role is filled by Cys-92.

Belongs to the ubiquitin-conjugating enzyme family.

It catalyses the reaction S-ubiquitinyl-[E1 ubiquitin-activating enzyme]-L-cysteine + [E2 ubiquitin-conjugating enzyme]-L-cysteine = [E1 ubiquitin-activating enzyme]-L-cysteine + S-ubiquitinyl-[E2 ubiquitin-conjugating enzyme]-L-cysteine.. The enzyme catalyses S-ubiquitinyl-[E1 ubiquitin-activating enzyme]-L-cysteine + [acceptor protein]-N-terminal-amino acid = [E1 ubiquitin-activating enzyme]-L-cysteine + N-terminal-ubiquitinyl-[acceptor protein].. It participates in protein modification; protein ubiquitination. Accepts ubiquitin from the E1 complex and catalyzes its covalent attachment to other proteins. Together with ubc-18, required for the ubiquitination of membranous organelles, and the removal of paternal mitochondria from early embryos. This chain is Ubiquitin-conjugating enzyme E2 W, found in Caenorhabditis elegans.